Reading from the N-terminus, the 245-residue chain is 14-3-3 protein theta (245 aa).

Position 1 is an N-acetylmethionine (Met-1). An N6-acetyllysine modification is found at Lys-3. Lys-49 is subject to N6-acetyllysine; alternate. A Glycyl lysine isopeptide (Lys-Gly) (interchain with G-Cter in SUMO2); alternate cross-link involves residue Lys-49. At Lys-68 the chain carries N6-acetyllysine. Tyr-82 carries the post-translational modification 3'-nitrotyrosine. A Phosphoserine modification is found at Ser-92. At Tyr-104 the chain carries 3'-nitrotyrosine. N6-acetyllysine is present on Lys-115. Residue Ser-232 is modified to Phosphoserine; by CK1.

This sequence belongs to the 14-3-3 family. In terms of assembly, homodimer. Interacts with CDK16. Interacts with RGS7 (phosphorylated form). Interacts with SSH1. Interacts with CDKN1B ('Thr-198' phosphorylated form); the interaction translocates CDKN1B to the cytoplasm. Interacts with GAB2. Interacts with the 'Ser-241' phosphorylated form of PDPK1. Interacts with the 'Thr-369' phosphorylated form of DAPK2. Interacts with PI4KB, TBC1D22A and TBC1D22B. Interacts with SLITRK1. Interacts with RIPOR2. Interacts with INAVA; the interaction increases upon PRR (pattern recognition receptor) stimulation and is required for cellular signaling pathway activation and cytokine secretion. Interacts with MARK2, MARK3 and MARK4. Interacts with MEFV.

Its subcellular location is the cytoplasm. In terms of biological role, adapter protein implicated in the regulation of a large spectrum of both general and specialized signaling pathways. Binds to a large number of partners, usually by recognition of a phosphoserine or phosphothreonine motif. Binding generally results in the modulation of the activity of the binding partner. Negatively regulates the kinase activity of PDPK1. This is 14-3-3 protein theta (YWHAQ) from Bos taurus (Bovine).